The primary structure comprises 227 residues: MTIELKPGGLLIAIEGIDGAGKTTLARRLTTTLEAAGARVVLSKEPTNGPWGTKLRQSAATGRLSADEEAELLIRDRHEHVDTLIAPALARGDIVILDRYFPSMVAYQGAAGLPLDELLELNAFAPRPDVLLLLDLPPPTGLARIRARGDAPNHFETQDNLERCRTIFAGLELPGKHVVDASADADSVLRQAHAIIVAALADRLSGDGAPADTGKAALELLSAGRPA.

16 to 23 (GIDGAGKT) provides a ligand contact to ATP.

The protein belongs to the thymidylate kinase family.

The catalysed reaction is dTMP + ATP = dTDP + ADP. Phosphorylation of dTMP to form dTDP in both de novo and salvage pathways of dTTP synthesis. The sequence is that of Thymidylate kinase from Xanthomonas oryzae pv. oryzae (strain MAFF 311018).